Reading from the N-terminus, the 94-residue chain is Aspartyl/glutamyl-tRNA(Asn/Gln) amidotransferase subunit C (94 aa).

The protein belongs to the GatC family. In terms of assembly, heterotrimer of A, B and C subunits.

The catalysed reaction is L-glutamyl-tRNA(Gln) + L-glutamine + ATP + H2O = L-glutaminyl-tRNA(Gln) + L-glutamate + ADP + phosphate + H(+). The enzyme catalyses L-aspartyl-tRNA(Asn) + L-glutamine + ATP + H2O = L-asparaginyl-tRNA(Asn) + L-glutamate + ADP + phosphate + 2 H(+). Allows the formation of correctly charged Asn-tRNA(Asn) or Gln-tRNA(Gln) through the transamidation of misacylated Asp-tRNA(Asn) or Glu-tRNA(Gln) in organisms which lack either or both of asparaginyl-tRNA or glutaminyl-tRNA synthetases. The reaction takes place in the presence of glutamine and ATP through an activated phospho-Asp-tRNA(Asn) or phospho-Glu-tRNA(Gln). In Caldicellulosiruptor saccharolyticus (strain ATCC 43494 / DSM 8903 / Tp8T 6331), this protein is Aspartyl/glutamyl-tRNA(Asn/Gln) amidotransferase subunit C.